The following is a 162-amino-acid chain: Phosphopantetheine adenylyltransferase (162 aa).

Position 9 (serine 9) interacts with substrate. Residues 9–10 (SF) and histidine 17 contribute to the ATP site. Substrate-binding residues include lysine 41, leucine 73, and lysine 87. ATP contacts are provided by residues 88 to 90 (GLR), glutamate 98, and 122 to 128 (YSFLSSS).

This sequence belongs to the bacterial CoaD family. Homohexamer. Mg(2+) serves as cofactor.

Its subcellular location is the cytoplasm. The catalysed reaction is (R)-4'-phosphopantetheine + ATP + H(+) = 3'-dephospho-CoA + diphosphate. It participates in cofactor biosynthesis; coenzyme A biosynthesis; CoA from (R)-pantothenate: step 4/5. In terms of biological role, reversibly transfers an adenylyl group from ATP to 4'-phosphopantetheine, yielding dephospho-CoA (dPCoA) and pyrophosphate. The chain is Phosphopantetheine adenylyltransferase from Salinispora tropica (strain ATCC BAA-916 / DSM 44818 / JCM 13857 / NBRC 105044 / CNB-440).